Consider the following 261-residue polypeptide: tRNA pseudouridine synthase A (261 aa).

Residue D52 is the Nucleophile of the active site. Y110 contributes to the substrate binding site.

Belongs to the tRNA pseudouridine synthase TruA family. In terms of assembly, homodimer.

It carries out the reaction uridine(38/39/40) in tRNA = pseudouridine(38/39/40) in tRNA. In terms of biological role, formation of pseudouridine at positions 38, 39 and 40 in the anticodon stem and loop of transfer RNAs. This is tRNA pseudouridine synthase A from Blochmanniella pennsylvanica (strain BPEN).